An 893-amino-acid chain; its full sequence is DNA mismatch repair protein MutS (893 aa).

631–638 contacts ATP; sequence GPNMAGKS. Residues 821–858 are disordered; the sequence is AGRPRVAVRQPQGGRRGASTGQLGLFGMEPAQGGTGVT.

Belongs to the DNA mismatch repair MutS family.

Its function is as follows. This protein is involved in the repair of mismatches in DNA. It is possible that it carries out the mismatch recognition step. This protein has a weak ATPase activity. This is DNA mismatch repair protein MutS from Myxococcus xanthus (strain DK1622).